A 492-amino-acid chain; its full sequence is ATP synthase subunit beta, chloroplastic (492 aa).

170–177 (GGAGVGKT) provides a ligand contact to ATP.

Belongs to the ATPase alpha/beta chains family. In terms of assembly, F-type ATPases have 2 components, CF(1) - the catalytic core - and CF(0) - the membrane proton channel. CF(1) has five subunits: alpha(3), beta(3), gamma(1), delta(1), epsilon(1). CF(0) has four main subunits: a(1), b(1), b'(1) and c(9-12).

It localises to the plastid. The protein resides in the chloroplast thylakoid membrane. It catalyses the reaction ATP + H2O + 4 H(+)(in) = ADP + phosphate + 5 H(+)(out). Its function is as follows. Produces ATP from ADP in the presence of a proton gradient across the membrane. The catalytic sites are hosted primarily by the beta subunits. This Psilotum nudum (Whisk fern) protein is ATP synthase subunit beta, chloroplastic.